We begin with the raw amino-acid sequence, 1292 residues long: Zinc finger CCCH domain-containing protein 44 (1292 aa).

The segment covering 1-10 has biased composition (polar residues); that stretch reads MENQQKQLQQ. Disordered stretches follow at residues 1-24 and 72-107; these read MENQ…REES and IDEA…KKED. The segment at 110-176 adopts a PHD-type zinc-finger fold; sequence EDVCFICFDG…SYMCYTCTFS (67 aa). Disordered stretches follow at residues 256-313 and 401-426; these read PWKE…LKKA and KGAK…VHDP. One can recognise an SWIB/MDM2 domain in the interval 313 to 396; that stretch reads APGDTSWATK…LKLLESHVLI (84 aa). The segment covering 404-414 has biased composition (polar residues); it reads KTTNGETTHAV. Positions 453–586 constitute a Plus3 domain; it reads AIDVHNINLI…TAATLQAMRI (134 aa). 4 disordered regions span residues 624–731, 777–832, 876–915, and 1170–1245; these read PEVH…TQGP, TTLP…SNDP, DVRE…INGS, and TTVE…HNNR. Low complexity predominate over residues 661–675; sequence QNKGVNLNNVGNNVQ. Positions 689–698 are enriched in basic and acidic residues; sequence VHADKDDCSK. Residues 699-708 are compositionally biased toward polar residues; sequence VHNNSSNIQE. The region spanning 716–770 is the GYF domain; the sequence is SEIWHYRDPTGKTQGPFSMVQLRRWKSSGHFPPYLRIWRAHENQDESVLLTDALA. A compositionally biased stretch (low complexity) spans 813–829; it reads VNTSATSSSSSTVTAHS. 2 stretches are compositionally biased toward polar residues: residues 882–899 and 906–915; these read GTDQ…NTTK and NGGSVSINGS. Low complexity-rich tracts occupy residues 1188–1206 and 1231–1244; these read SSEP…SARG and NNGH…SHNN. Residues 1267-1292 form a C3H1-type zinc finger; it reads PKGLKICKFYESGYCKRGASCSFWHP.

This is Zinc finger CCCH domain-containing protein 44 from Arabidopsis thaliana (Mouse-ear cress).